The sequence spans 439 residues: Vacuolar protein sorting-associated protein 4 (439 aa).

The MIT domain maps to 8 to 75 (LSKGIDLVQK…TRAEQLKDHL (68 aa)). A disordered region spans residues 76–113 (EKQAQNKSTAESSVNGSTKAKKSNGDGNGSGDDNDDAD). Over residues 80-93 (QNKSTAESSVNGST) the composition is skewed to polar residues. ATP is bound at residue 175–182 (GPPGTGKS).

This sequence belongs to the AAA ATPase family. As to quaternary structure, monomer or homodimer (in nucleotide-free form). Decamer, dodecamer or tetradecamer of two stacked respective homooligomeric rings (when bound to ATP); the dodecameric form seems to be predominant.

The protein localises to the endosome membrane. In terms of biological role, pre-vacuolar protein sorting protein involved in the transport of biosynthetic membrane proteins from the prevacuolar/endosomal compartment to the vacuole. Required for multivesicular body (MVB) protein sorting. Catalyzes the ATP-dependent dissociation of class E VPS proteins from endosomal membranes, such as the disassembly of the ESCRT-III complex. Required for extracellular secretion of the secreted aspartyl proteases SAP2, SAP4, SAP5, and SAP6. Its regulation of the pre-vacuolar secretory pathway is critical for virulence. The protein is Vacuolar protein sorting-associated protein 4 of Candida albicans (strain SC5314 / ATCC MYA-2876) (Yeast).